The following is a 283-amino-acid chain: Short-chain dehydrogenase cctT (283 aa).

The N-terminal stretch at 1–20 (MLKTVLITGCSHGGLGAAMA) is a signal peptide. Residues Ile7, Thr33, Lys39, Glu55, and Asn83 each contribute to the NADP(+) site. The N-linked (GlcNAc...) asparagine glycan is linked to Asn131. Residue Ser133 is the Proton donor of the active site. NADP(+) is bound by residues Tyr147, Arg151, Val180, and Thr182. Tyr147 (proton acceptor) is an active-site residue.

Belongs to the short-chain dehydrogenases/reductases (SDR) family.

Short-chain dehydrogenase; part of the gene cluster that mediates the biosynthesis of the mycotoxin cyclochlorotine, a hepatotoxic and carcinogenic cyclic chlorinated pentapeptide. The function of cctT within the pathway, if any, remains undetermined. The NRPS cctN initially catalyzes the condensation of L-serine (Ser), Pro, L-2-aminobutyrate (2Abu), Ser, and beta-Phe in this order to produce isocyclotine. After the dichlorination of Pro2 catalyzed by cctP2 to produce isocyclochlorotine, the cctO-mediated transacylation of isocyclochlorotine can furnish cyclochlorotine. The subsequent hydroxylation of cyclochlorotine by cctR yields hydroxycyclochlorotine as the final product. CctP1 probably acts as a phenylalanine aminomutase and provides the uncommon building block beta-Phe. Furthermore, 2Abu can be synthesized from threonine by one of the threonine dehydratases and transaminases localized outside of the cluster. The functions of the remaining proteins encoded by the cluster, cctM and cctT, have not been identified yet. This is Short-chain dehydrogenase cctT from Talaromyces islandicus (Penicillium islandicum).